We begin with the raw amino-acid sequence, 147 residues long: NADH-quinone oxidoreductase subunit A (147 aa).

Transmembrane regions (helical) follow at residues Ile-11–Leu-31, Leu-68–Val-88, and Leu-93–Ala-113.

The protein belongs to the complex I subunit 3 family. In terms of assembly, NDH-1 is composed of 14 different subunits. Subunits NuoA, H, J, K, L, M, N constitute the membrane sector of the complex.

The protein resides in the cell inner membrane. The enzyme catalyses a quinone + NADH + 5 H(+)(in) = a quinol + NAD(+) + 4 H(+)(out). Functionally, NDH-1 shuttles electrons from NADH, via FMN and iron-sulfur (Fe-S) centers, to quinones in the respiratory chain. The immediate electron acceptor for the enzyme in this species is believed to be ubiquinone. Couples the redox reaction to proton translocation (for every two electrons transferred, four hydrogen ions are translocated across the cytoplasmic membrane), and thus conserves the redox energy in a proton gradient. In Nitrosospira multiformis (strain ATCC 25196 / NCIMB 11849 / C 71), this protein is NADH-quinone oxidoreductase subunit A.